Consider the following 378-residue polypeptide: Transaldolase 1 (378 aa).

Residue Lys-146 is the Schiff-base intermediate with substrate of the active site.

Belongs to the transaldolase family. Type 2 subfamily.

It is found in the cytoplasm. The catalysed reaction is D-sedoheptulose 7-phosphate + D-glyceraldehyde 3-phosphate = D-erythrose 4-phosphate + beta-D-fructose 6-phosphate. It participates in carbohydrate degradation; pentose phosphate pathway; D-glyceraldehyde 3-phosphate and beta-D-fructose 6-phosphate from D-ribose 5-phosphate and D-xylulose 5-phosphate (non-oxidative stage): step 2/3. In terms of biological role, transaldolase is important for the balance of metabolites in the pentose-phosphate pathway. The polypeptide is Transaldolase 1 (Streptomyces avermitilis (strain ATCC 31267 / DSM 46492 / JCM 5070 / NBRC 14893 / NCIMB 12804 / NRRL 8165 / MA-4680)).